The sequence spans 274 residues: 5'-nucleotidase SurE (274 aa).

The a divalent metal cation site is built by Asp12, Asp13, Ser45, and Asn103.

This sequence belongs to the SurE nucleotidase family. The cofactor is a divalent metal cation.

It is found in the cytoplasm. The enzyme catalyses a ribonucleoside 5'-phosphate + H2O = a ribonucleoside + phosphate. Nucleotidase that shows phosphatase activity on nucleoside 5'-monophosphates. This chain is 5'-nucleotidase SurE, found in Chlamydia felis (strain Fe/C-56) (Chlamydophila felis).